The primary structure comprises 293 residues: Glycine--tRNA ligase alpha subunit (293 aa).

The protein belongs to the class-II aminoacyl-tRNA synthetase family. As to quaternary structure, tetramer of two alpha and two beta subunits.

The protein localises to the cytoplasm. It catalyses the reaction tRNA(Gly) + glycine + ATP = glycyl-tRNA(Gly) + AMP + diphosphate. In Wolinella succinogenes (strain ATCC 29543 / DSM 1740 / CCUG 13145 / JCM 31913 / LMG 7466 / NCTC 11488 / FDC 602W) (Vibrio succinogenes), this protein is Glycine--tRNA ligase alpha subunit.